Consider the following 447-residue polypeptide: Putative branched-chain amino acid carrier protein SAR1419 (447 aa).

12 helical membrane passes run 6 to 26 (WVIG…IFPP), 40 to 60 (ILAF…VGAL), 74 to 94 (PKFS…LFAI), 114 to 134 (SSIA…YICL), 143 to 163 (IGSL…IKAY), 193 to 213 (GYLT…VNAV), 229 to 249 (LTAG…LGYI), 290 to 310 (LLGI…IVAV), 326 to 346 (FVLV…NAVI), 350 to 370 (IPVL…ILIA), 382 to 402 (IPVI…LGWL), and 417 to 437 (LEWF…GIFV).

Belongs to the branched chain amino acid transporter family.

The protein resides in the cell membrane. Its function is as follows. Component of the transport system for branched-chain amino acids (leucine, isoleucine and valine), which is coupled to a proton motive force (Potential). Contributes to NaCl tolerance. This Staphylococcus aureus (strain MRSA252) protein is Putative branched-chain amino acid carrier protein SAR1419.